We begin with the raw amino-acid sequence, 182 residues long: T-cell surface glycoprotein CD3 gamma chain (182 aa).

The signal sequence occupies residues 1 to 22 (MEQGKGLAVLILAIILLQGTLA). The Extracellular segment spans residues 23 to 116 (QSIKGNHLVK…CIELNAATIS (94 aa)). The 58-residue stretch at 37–94 (QEDGSVLLTCDAEAKNITWFKDGKMIGFLTEDKKKWNLGSNAKDPRGMYQCKGSQNKS) folds into the Ig-like domain. Residues cysteine 46 and cysteine 87 are joined by a disulfide bond. 2 N-linked (GlcNAc...) asparagine glycosylation sites follow: asparagine 52 and asparagine 92. Residues 117 to 137 (GFLFAEIVSIFVLAVGVYFIA) traverse the membrane as a helical segment. Topologically, residues 138–182 (GQDGVRQSRASDKQTLLPNDQLYQPLKDREDDQYSHLQGNQLRRN) are cytoplasmic. At serine 145 the chain carries Phosphoserine. A Phosphoserine; by PKC modification is found at serine 148. Residues 149–177 (DKQTLLPNDQLYQPLKDREDDQYSHLQGN) enclose the ITAM domain. The short motif at 153 to 154 (LL) is the Di-leucine motif element.

As to quaternary structure, the TCR-CD3 complex is composed of a CD3D/CD3E and a CD3G/CD3E heterodimers that preferentially associate with TCRalpha and TCRbeta, respectively, to form TCRalpha/CD3E/CD3G and TCRbeta/CD3G/CD3E trimers. In turn, the hexamer interacts with CD3Z homodimer to form the TCR-CD3 complex. Alternatively, TCRalpha and TCRbeta can be replaced by TCRgamma and TCRdelta. In terms of processing, phosphorylated on Tyr residues after T-cell receptor triggering by LCK in association with CD4/CD8. Phosphorylated also by PKC; leading to the TCR complex down-regulation. Post-translationally, phosphorylated on Tyr residues after T-cell receptor triggering by LCK in association with CD4/CD8.

The protein localises to the cell membrane. Part of the TCR-CD3 complex present on T-lymphocyte cell surface that plays an essential role in adaptive immune response. When antigen presenting cells (APCs) activate T-cell receptor (TCR), TCR-mediated signals are transmitted across the cell membrane by the CD3 chains CD3D, CD3E, CD3G and CD3Z. All CD3 chains contain immunoreceptor tyrosine-based activation motifs (ITAMs) in their cytoplasmic domain. Upon TCR engagement, these motifs become phosphorylated by Src family protein tyrosine kinases LCK and FYN, resulting in the activation of downstream signaling pathways. In addition to this role of signal transduction in T-cell activation, CD3G plays an essential role in the dynamic regulation of TCR expression at the cell surface. Indeed, constitutive TCR cycling is dependent on the di-leucine-based (diL) receptor-sorting motif present in CD3G. This chain is T-cell surface glycoprotein CD3 gamma chain (CD3G), found in Homo sapiens (Human).